The following is a 588-amino-acid chain: Proline--tRNA ligase (588 aa).

This sequence belongs to the class-II aminoacyl-tRNA synthetase family. ProS type 1 subfamily. As to quaternary structure, homodimer.

The protein resides in the cytoplasm. It carries out the reaction tRNA(Pro) + L-proline + ATP = L-prolyl-tRNA(Pro) + AMP + diphosphate. Its function is as follows. Catalyzes the attachment of proline to tRNA(Pro) in a two-step reaction: proline is first activated by ATP to form Pro-AMP and then transferred to the acceptor end of tRNA(Pro). As ProRS can inadvertently accommodate and process non-cognate amino acids such as alanine and cysteine, to avoid such errors it has two additional distinct editing activities against alanine. One activity is designated as 'pretransfer' editing and involves the tRNA(Pro)-independent hydrolysis of activated Ala-AMP. The other activity is designated 'posttransfer' editing and involves deacylation of mischarged Ala-tRNA(Pro). The misacylated Cys-tRNA(Pro) is not edited by ProRS. This Corynebacterium glutamicum (strain R) protein is Proline--tRNA ligase.